The sequence spans 249 residues: DNA polymerase sliding clamp 3 (249 aa).

This sequence belongs to the PCNA family. As to quaternary structure, homotrimer. The subunits circularize to form a toroid; DNA passes through its center. Replication factor C (RFC) is required to load the toroid on the DNA.

In terms of biological role, sliding clamp subunit that acts as a moving platform for DNA processing. Responsible for tethering the catalytic subunit of DNA polymerase and other proteins to DNA during high-speed replication. The sequence is that of DNA polymerase sliding clamp 3 from Aeropyrum pernix (strain ATCC 700893 / DSM 11879 / JCM 9820 / NBRC 100138 / K1).